The primary structure comprises 109 residues: Phosphoribosyl-ATP pyrophosphatase (109 aa).

Belongs to the PRA-PH family.

Its subcellular location is the cytoplasm. It catalyses the reaction 1-(5-phospho-beta-D-ribosyl)-ATP + H2O = 1-(5-phospho-beta-D-ribosyl)-5'-AMP + diphosphate + H(+). It participates in amino-acid biosynthesis; L-histidine biosynthesis; L-histidine from 5-phospho-alpha-D-ribose 1-diphosphate: step 2/9. The polypeptide is Phosphoribosyl-ATP pyrophosphatase (Sphingopyxis alaskensis (strain DSM 13593 / LMG 18877 / RB2256) (Sphingomonas alaskensis)).